Consider the following 315-residue polypeptide: Ornithine carbamoyltransferase (315 aa).

Residues 53 to 56 (STRT), Q80, R104, and 131 to 134 (HPCQ) contribute to the carbamoyl phosphate site. Residues N163, D227, and 231–232 (SM) each bind L-ornithine. Carbamoyl phosphate is bound by residues 267-268 (CL) and R295.

Belongs to the aspartate/ornithine carbamoyltransferase superfamily. OTCase family.

Its subcellular location is the cytoplasm. The enzyme catalyses carbamoyl phosphate + L-ornithine = L-citrulline + phosphate + H(+). The protein operates within amino-acid degradation; L-arginine degradation via ADI pathway; carbamoyl phosphate from L-arginine: step 2/2. Reversibly catalyzes the transfer of the carbamoyl group from carbamoyl phosphate (CP) to the N(epsilon) atom of ornithine (ORN) to produce L-citrulline. This chain is Ornithine carbamoyltransferase, found in Rhodococcus opacus (strain B4).